We begin with the raw amino-acid sequence, 2466 residues long: MSDHNHTNGTTNGNGIGSNGVQSHVPNGAHINGTSSGLKPNGISNGTTNGINGHAPSTAATQTPVAVVGLACRLPGKSNSPEALWKFLLDGGVADPTPPDHRYNFSTHYDGSQRPGTMPSPGGMLLRDVDLTAFDASFFNIGHAEAAVMDPQQRQLLEVTYECLENSGVPLGKLRGTRAGCVVANNAVEYEGFATHDREDNVSGGSTGFSRSILSNRISHYLDIQGPSISIDTACSGTLVGVDLACRYLQTNQADGMLVGGALLYLDPSALQDTGPMKGAFSPTGQCHTFDADADGYIRGEAISCVYLKRLDDAIRDGDPIRAVIRGSATNSDGNTTSLTQPSSAAQAAAIRMAYSNAGISDFNETGYLECHGTGTPTGDPLEVAGLASVFAPTRPAEKPLIIGSIKSNVGHSESAAGLSGLIKTVLTVERGVIPGTPTFIKPTPRIDFDKSRVRPSRRTIRWPQSASGLRRASVNSFGFGGTNAHVVLEARDSMIKDPSVRKGFVFSNHGSSLFGLDADLEAGSERPYILALSANDKDALETNIQTLSTHLGDPAVGVKLSDVAYTLSERRTHHFHRGFVIADSLEISSDSMILGKKKAQPPRVAFIFTGQGAQWSQMGRDLIESFPLAKATIQKLDAALQTLPNPPQWSLVDELCEAREGAVLRLPEFSQPLVTALQIAQLTVLSHWGISATRVLGHSSGEIAAAVAAGLVRPEEAIKIAYLRGLAAKFHQPDQPLGMLAVGVSAEAVAPYLETEPTVQIACFNSPTSLTLSGQQPDLVRVCDRLKADGHFARMLQVNLAYHSEHIRSIAEEYHSLLKEQVPGAAGSSGNKKVTMFSSVTGKPISEAYDALGPDYWRQNMVSPVRFAQAASNMLSGPESSEFLIEIGPAGALAGPVAQVIKAAPSARNTQYVAAAKRGADTLLALYETAGKLWANSGVVDLAKVNGYDGQANLVVDLPNYQWNHSRRYWRESLSASEFLQRPFLSHDLLGSKILSVPWHNPTFYQVIELSDVPWLRDHKIGDQVIFPAAGYLSMAVEAIHQTTVMTQWREKGVPKSFAYCLKDVRFLRSLVLEEDVRAKISLALIPLHASPRRWYNFRVRSLMEGVWVDHCDGLVRIDEEAFDTTAPSRALEPLAHPEPGAVGYKSANAGEFSFGPAFQRIEYFDWIWGSPETRAQVTTEYPVSAYSKQSEYPVHPVAMDCLLQLTGYSIAQMQMNALDDINCVPVGIEGIVIPSRSNPPAKSCMVRSVAHLLDSSTSQTYGSRFASAGLYDPEDRSLVMEIKRIRFDPISSRGDQSEHVYMHFGWNADVSLTDAEGLNSYLAAAAGSPEEKDLVAVATPEEQKNDESRSSPFALVQRLLDALAHRRPEMAVLEANLDSDDSTCLWLDLPSKSNNSGPRSGYSKFHCVSKDPKALSHLQETHNEAPRTTWDLVDMAHPSGRIDSTDKFDLILVKSSDPETTFTTPALLSNIVASVSEGGMVILLNTQGKPTVFHDASQALEASGLCRTKDLSASVGGLAIVATARRVGPAATTASGDKVITCFRLTDDDGPSNVLAGLKDAGWAVNTCSDADALAHRSNILVVDELFTTVASRVTAEQWKMLQTIIRKECNVLWVTKGGQMEVTEPDRAAAPGLLRTIRSEELGIRLISLDVENPTGPRTLYAIEECLRLLQESHAGIQKDSEFVERGGVIFTPRLLADPALNAAKHEPVNGRKPQMESLQDKKTPVCLGVERVGTIDSLHYAERSPTPLPIKDGYIEIEIHAAGVNFKDLALTLGIVNSNDPFTLGGEAAGVVSRIGKGVPGDRFVAGQRVVAMFPGSFGNRIQVPWQVAHAIPDRLSFEEAATLPVAFLTAMHGLFDLGNLQAGQRVLIHSATGGTGSAAVQLCQHMGAEIFATAGTEEKRRFLQDIYNIPADHIFSSRTTDFEHQIMRLTGGLGVDVILNSLTGDLLEASWNIIAHGGTMVEIGKKDIMEHSRLSMEPFSRSASFRALDLSLDTADLYGKGAGLGQTVGRLFERLFSLLERGHVRPITPMQTFAFGQVTDALALMRSTKHMGKLVLSRGPDSNDQVAIRPAQRLVRFRPDATYLLVGGLKGICGSLAVDFAKKGAKHLAALSRSNYDDPQSQIVLRQLKDLDCQIDLLRGDITKVEDVRRVFAETTVPVAGIIQGAMVLRDRPFANMTVEEYHAAAACKIQGTWNLHNCAQEAQAPLDFFTILSSISSVLGNPAQGNYASGCSFQDAFSSYRQELGLPASTVNLGIIEQIGYMARNEDLLEKNVSSEVAKGINERLLCKIIGYSILQQSGSPVSEDPYSRARMVTGLTMPQPPDSMLRLDARFAALFVRDGSSSNTQAGGSGAASQDVSQEIKELNLLLRSKSARAANLPQVVDATLAVVSGYLVRAMRLSEAIEPERSLSAYGIDSLAAVEFRNWLRLELGAAMSVIDITTAPSLLFLAEKIITKVDGVE.

Residues 1–57 form a disordered region; the sequence is MSDHNHTNGTTNGNGIGSNGVQSHVPNGAHINGTSSGLKPNGISNGTTNGINGHAPS. Residues 41–53 are compositionally biased toward low complexity; the sequence is NGISNGTTNGING. One can recognise a Ketosynthase family 3 (KS3) domain in the interval 62-491; it reads QTPVAVVGLA…GTNAHVVLEA (430 aa). Catalysis depends on for beta-ketoacyl synthase activity residues Cys235, His372, and His412. Residues 608–921 form a malonyl-CoA:ACP transacylase (MAT) domain region; the sequence is IFTGQGAQWS…QYVAAAKRGA (314 aa). The For malonyltransferase activity role is filled by Ser700. The N-terminal hotdog fold stretch occupies residues 988–1124; that stretch reads HDLLGSKILS…GLVRIDEEAF (137 aa). The dehydratase (DH) domain stretch occupies residues 988 to 1297; it reads HDLLGSKILS…RFDPISSRGD (310 aa). Residues 988-1298 enclose the PKS/mFAS DH domain; it reads HDLLGSKILS…FDPISSRGDQ (311 aa). His1020 acts as the Proton acceptor; for dehydratase activity in catalysis. The tract at residues 1137-1298 is C-terminal hotdog fold; that stretch reads AHPEPGAVGY…FDPISSRGDQ (162 aa). Asp1202 serves as the catalytic Proton donor; for dehydratase activity. Residues 1737–2061 form an enoyl reductase (ER) domain region; sequence GTIDSLHYAE…STKHMGKLVL (325 aa). Residues 2087 to 2264 form a ketoreductase (KR) domain region; that stretch reads TYLLVGGLKG…STVNLGIIEQ (178 aa). Residues 2382-2462 form the Carrier domain; the sequence is ANLPQVVDAT…FLAEKIITKV (81 aa). Ser2422 is subject to O-(pantetheine 4'-phosphoryl)serine.

Requires pantetheine 4'-phosphate as cofactor.

The protein operates within secondary metabolite biosynthesis. Highly reducing polyketide synthase (HR-PKS); part of the gene cluster that mediates the biosynthesis of phaeospelide A, a fungal polyene macrolide with a 34-membered macrolactone ring and an all-trans conjugated hexaene structure. The HR-PKS ApmlA uses acetyl-CoA and malonyl-CoA as its starter and extender units, respectively, and provides the large carbon framework in phaeospelide via 16 cycles of polyketide chain elongation, which is the largest number identified in fungal iterative PKSs thus far. During round 1, the KR domain reduces beta-ketone to an L-oriented hydroxy group, while during later rounds, it provides hydroxy groups in the D-configuration. The characteristic conjugated hexaene moiety is built during the later rounds (10-15), when the KR and DH domains are at work but ER is off. Phylogenetic analysis of the DH domain suggests that a polyene formation is programmed in the DH domain. Finally, the mature ACP-tethered carbon chain is transferred to the serine residue of the thiohydrolase apmlB, followed by intramolecular macrolactonization, generating phaeospelide A. When one elongation cycle during rounds 7-9 is skipped, phaeospelide B is biosynthesized instead. The protein is Highly reducing polyketide synthase apmlA of Arthrinium phaeospermum (Gymnosporium phaeospermum).